Here is a 365-residue protein sequence, read N- to C-terminus: Chorismate synthase (365 aa).

Residue Arg-46 coordinates NADP(+). FMN contacts are provided by residues 123-125 (RSS), 241-242 (NG), Gly-281, 296-300 (KPTPS), and Arg-322.

This sequence belongs to the chorismate synthase family. As to quaternary structure, homotetramer. The cofactor is FMNH2.

The enzyme catalyses 5-O-(1-carboxyvinyl)-3-phosphoshikimate = chorismate + phosphate. Its pathway is metabolic intermediate biosynthesis; chorismate biosynthesis; chorismate from D-erythrose 4-phosphate and phosphoenolpyruvate: step 7/7. Catalyzes the anti-1,4-elimination of the C-3 phosphate and the C-6 proR hydrogen from 5-enolpyruvylshikimate-3-phosphate (EPSP) to yield chorismate, which is the branch point compound that serves as the starting substrate for the three terminal pathways of aromatic amino acid biosynthesis. This reaction introduces a second double bond into the aromatic ring system. The protein is Chorismate synthase of Helicobacter pylori (strain G27).